The primary structure comprises 374 residues: Probable dual-specificity RNA methyltransferase RlmN (374 aa).

A compositionally biased stretch (basic and acidic residues) spans Met-1–Lys-17. The segment at Met-1 to Arg-22 is disordered. The Proton acceptor role is filled by Glu-119. The Radical SAM core domain maps to Ser-125–Thr-360. Cys-132 and Cys-365 are disulfide-bonded. 3 residues coordinate [4Fe-4S] cluster: Cys-139, Cys-143, and Cys-146. S-adenosyl-L-methionine contacts are provided by residues Gly-190–Glu-191, Ser-223, Ser-246–His-248, and Asn-322. The S-methylcysteine intermediate role is filled by Cys-365.

The protein belongs to the radical SAM superfamily. RlmN family. Requires [4Fe-4S] cluster as cofactor.

The protein resides in the cytoplasm. The enzyme catalyses adenosine(2503) in 23S rRNA + 2 reduced [2Fe-2S]-[ferredoxin] + 2 S-adenosyl-L-methionine = 2-methyladenosine(2503) in 23S rRNA + 5'-deoxyadenosine + L-methionine + 2 oxidized [2Fe-2S]-[ferredoxin] + S-adenosyl-L-homocysteine. The catalysed reaction is adenosine(37) in tRNA + 2 reduced [2Fe-2S]-[ferredoxin] + 2 S-adenosyl-L-methionine = 2-methyladenosine(37) in tRNA + 5'-deoxyadenosine + L-methionine + 2 oxidized [2Fe-2S]-[ferredoxin] + S-adenosyl-L-homocysteine. Specifically methylates position 2 of adenine 2503 in 23S rRNA and position 2 of adenine 37 in tRNAs. This Chlorobaculum tepidum (strain ATCC 49652 / DSM 12025 / NBRC 103806 / TLS) (Chlorobium tepidum) protein is Probable dual-specificity RNA methyltransferase RlmN.